A 1562-amino-acid chain; its full sequence is Pikromycin polyketide synthase component PikAIII (1562 aa).

In terms of domain architecture, Ketosynthase family 3 (KS3) spans 34–464 (HEPVAIVGMA…GTNAHVVLEE (431 aa)). Residues 37 to 1475 (VAIVGMACRL…TPAALAAHLH (1439 aa)) form a module 5 region. Cys209 serves as the catalytic Acyl-thioester intermediate; for beta-ketoacyl synthase activity. Residues His344 and His384 each act as for beta-ketoacyl synthase activity in the active site. An acyltransferase region spans residues 565–866 (FVFPGQGTQW…GGQERLVTSL (302 aa)). The active-site Acyl-ester intermediate; for acyltransferase activity is Ser655. A beta-ketoacyl reductase region spans residues 1116-1293 (GTVLITGGTG…ATSVAWGLWA (178 aa)). Residues 1124–1127 (TGAL), 1147–1150 (SRSG), 1176–1177 (DV), Lys1226, and 1248–1249 (YS) each bind NADP(+). Catalysis depends on Tyr1263, which acts as the Acyl-ester intermediate; for beta-ketoacyl reductase activity. Positions 1403 to 1478 (PALLTLVRTH…ALAAHLHEAY (76 aa)) constitute a Carrier domain. Ser1438 carries the post-translational modification O-(pantetheine 4'-phosphoryl)serine. Residues 1519–1548 (GIEPEPGSGGSDGGAADPGAEPEASIDDLD) are disordered. A compositionally biased stretch (low complexity) spans 1532–1541 (GAADPGAEPE).

As to quaternary structure, homodimer. Pikromycin PKS consists of a combination of multimodular (PikAI and PikAII) and monomodular (PikAIII and PikAIV) polypeptides each coding for a functional synthase subunit which participates in 1 (monomodular) or 2 (multimodular) of the six FAS-like elongation steps required for formation of the polyketide. Module 1, 2, 3, 4, 5, and 6 participating in biosynthesis steps 1, 2, 3, 4, 5, and 6, respectively. Pantetheine 4'-phosphate is required as a cofactor.

The enzyme catalyses 5 (S)-methylmalonyl-CoA + malonyl-CoA + 5 NADPH + 11 H(+) = 10-deoxymethynolide + 6 CO2 + 5 NADP(+) + 6 CoA + 2 H2O. It catalyses the reaction 6 (S)-methylmalonyl-CoA + malonyl-CoA + 5 NADPH + 12 H(+) = narbonolide + 7 CO2 + 5 NADP(+) + 7 CoA + 2 H2O. It participates in antibiotic biosynthesis. Its function is as follows. Involved in the biosynthesis of 12- and 14-membered ring macrolactone antibiotics such as methymycin and neomethymycin, and pikromycin and narbomycin, respectively. Component of the pikromycin PKS which catalyzes the biosynthesis of both precursors 10-deoxymethynolide (12-membered ring macrolactone) and narbonolide (14-membered ring macrolactone). Chain elongation through PikAI, PikAII and PikAIII followed by thioesterase catalyzed termination results in the production of 10-deoxymethynolide, while continued elongation through PikAIV, followed by thioesterase (TE) catalyzed cyclization results in the biosynthesis of the narbonolide. This chain is Pikromycin polyketide synthase component PikAIII, found in Streptomyces venezuelae.